Reading from the N-terminus, the 188-residue chain is MTAPSCAFPVQFRQPSVSGLSQITKSLYISNGVAANNKLMLSSNQITMVINVSVEVVNTLYEDIQYLQVPVADAPDSRLCDFFDPVADHIHSVEMKQGRTLLHCAAGVSRSAALCLAYLMKYHAMSLLDAHTWTKSCRPIIRPNSGFWEQLIHYEFQLFGKNTVHMVSSPMGMIPDIYEKEVRLMIPL.

In terms of domain architecture, Tyrosine-protein phosphatase spans 19-160 (GLSQITKSLY…LIHYEFQLFG (142 aa)). The sufficient for mitochondrial localization stretch occupies residues 95–141 (MKQGRTLLHCAAGVSRSAALCLAYLMKYHAMSLLDAHTWTKSCRPII). Residue Cys-104 is the Phosphocysteine intermediate of the active site.

The protein belongs to the protein-tyrosine phosphatase family. Non-receptor class dual specificity subfamily.

Its subcellular location is the cytoplasm. It is found in the nucleus. It localises to the mitochondrion inner membrane. The enzyme catalyses O-phospho-L-tyrosyl-[protein] + H2O = L-tyrosyl-[protein] + phosphate. It catalyses the reaction O-phospho-L-seryl-[protein] + H2O = L-seryl-[protein] + phosphate. The catalysed reaction is O-phospho-L-threonyl-[protein] + H2O = L-threonyl-[protein] + phosphate. Its function is as follows. Can dephosphorylate single and diphosphorylated synthetic MAPK peptides, with preference for the phosphotyrosine and diphosphorylated forms over phosphothreonine. In vitro, dephosphorylates p-nitrophenyl phosphate (pNPP). In Pongo abelii (Sumatran orangutan), this protein is Dual specificity protein phosphatase 18 (DUSP18).